The following is a 331-amino-acid chain: MKKKRPVLQDVADRVGVTKMTVSRFLRNPEQVSVALRGKIAAALDELGYIPNRAPDILSNATSRAIGVLLPSLTNQVFAEVLRGIESVTDAHGYQTMLAHYGYKPEMEQERLESMLSWNIDGLILTERTHTPRTLKMIEVAGIPVVELMDSKSPCLDIAVGFDNFEAARQMTTAIIARGHRHIAYLGARLDERTIIKQKGYEQAMLDAGLVPYSVMVEQSSSYSSGIELIRQARREYPQLDGVFCTNDDLAVGAAFECQRLGLKVPDDMAIAGFHGHDIGQVMEPRLASVLTPRERMGSIGAERLLARIRGESVTPKMLDLGFTLSPGGSI.

The HTH lacI-type domain maps to 6–60 (PVLQDVADRVGVTKMTVSRFLRNPEQVSVALRGKIAAALDELGYIPNRAPDILSN). The H-T-H motif DNA-binding region spans 8 to 27 (LQDVADRVGVTKMTVSRFLR).

It functions in the pathway carbohydrate acid metabolism; D-gluconate degradation [regulation]. In terms of biological role, negative regulator for the gluconate utilization system GNT-I, the gntUKR operon. This chain is HTH-type transcriptional regulator GntR (gntR), found in Escherichia coli O6:H1 (strain CFT073 / ATCC 700928 / UPEC).